Here is a 643-residue protein sequence, read N- to C-terminus: Aspartic protease 3 (643 aa).

The signal sequence occupies residues M1–A31. Low complexity predominate over residues A87–S99. A disordered region spans residues A87–R116. A Peptidase A1 domain is found at Y281 to A600. Residues D299 and D490 contribute to the active site.

Belongs to the peptidase A1 family.

Its subcellular location is the endomembrane system. Inhibited by 49c, a hydroxyethylamine scaffold-based compound. Its function is as follows. Required for the processing-mediated maturation of a subset of microneme proteins, such as MIC6, and rhoptry proteins, such as ROP1. By regulating microneme and rhoptry processing, plays an essential role in the lysis of the host cell membrane during egress and in rhoptry content discharge, which is required for invasion of host cells. The protein is Aspartic protease 3 of Toxoplasma gondii.